The sequence spans 184 residues: MDLSSLRPAKGAVKNKKRVGRGQGSGNGTTAGKGNKGQQARSGYKRPINEGGQIPVYRRLPKFGFTPIDRKSVTTVNLSQITRWIEQGLIENELGVIELKVLCHASNADYFKVLGNGEITAAVKITAHGFSKSAEAKITAAGGEAVTAVRTLEEAARVRDLAVEEALLKPKTKLVKRVKKNQKP.

Residues 1 to 50 (MDLSSLRPAKGAVKNKKRVGRGQGSGNGTTAGKGNKGQQARSGYKRPINE) form a disordered region. Positions 21 to 35 (RGQGSGNGTTAGKGN) are enriched in gly residues.

Belongs to the universal ribosomal protein uL15 family. In terms of assembly, part of the 50S ribosomal subunit.

Binds to the 23S rRNA. The sequence is that of Large ribosomal subunit protein uL15 from Chlorobium luteolum (strain DSM 273 / BCRC 81028 / 2530) (Pelodictyon luteolum).